The chain runs to 102 residues: Small ribosomal subunit protein uS10 (102 aa).

Belongs to the universal ribosomal protein uS10 family. As to quaternary structure, part of the 30S ribosomal subunit.

In terms of biological role, involved in the binding of tRNA to the ribosomes. In Geotalea daltonii (strain DSM 22248 / JCM 15807 / FRC-32) (Geobacter daltonii), this protein is Small ribosomal subunit protein uS10.